The chain runs to 160 residues: Transcription antitermination protein NusB (160 aa).

It belongs to the NusB family.

Involved in transcription antitermination. Required for transcription of ribosomal RNA (rRNA) genes. Binds specifically to the boxA antiterminator sequence of the ribosomal RNA (rrn) operons. The sequence is that of Transcription antitermination protein NusB from Rhizobium rhizogenes (strain K84 / ATCC BAA-868) (Agrobacterium radiobacter).